The primary structure comprises 391 residues: Probable chaperonin-like protein PrmG (391 aa).

The segment at 153–191 (TTRWSVRSSPPPSNTSARTASSPPRRATHSGCRSRSSTA) is disordered. Polar residues predominate over residues 154 to 174 (TRWSVRSSPPPSNTSARTASS).

This sequence belongs to the chaperonin (HSP60) family.

Its function is as follows. Probably plays an essential role in the productive folding of PrmA and PrmC, and thus in the formation of the active PrmABCD complex. This Gordonia sp. (strain TY-5) protein is Probable chaperonin-like protein PrmG.